The following is a 208-amino-acid chain: Small ribosomal subunit protein uS4 (208 aa).

The region spanning 98–166 is the S4 RNA-binding domain; the sequence is SRLDNVVYRM…VKEAIEASRN (69 aa).

This sequence belongs to the universal ribosomal protein uS4 family. In terms of assembly, part of the 30S ribosomal subunit. Contacts protein S5. The interaction surface between S4 and S5 is involved in control of translational fidelity.

Its function is as follows. One of the primary rRNA binding proteins, it binds directly to 16S rRNA where it nucleates assembly of the body of the 30S subunit. With S5 and S12 plays an important role in translational accuracy. In Kosmotoga olearia (strain ATCC BAA-1733 / DSM 21960 / TBF 19.5.1), this protein is Small ribosomal subunit protein uS4.